The primary structure comprises 204 residues: Putative t-SNARE coiled-coil homology domain-containing protein L657 (204 aa).

T-SNARE coiled-coil homology domains follow at residues 9 to 71 (SDYY…MDHV) and 140 to 202 (DNSR…IKHT). Positions 159–181 (VLEKQANDISNILDEQNNTLEII) form a coiled coil.

This is Putative t-SNARE coiled-coil homology domain-containing protein L657 from Acanthamoeba polyphaga (Amoeba).